The following is a 263-amino-acid chain: tRNA (guanine-N(7)-)-methyltransferase (263 aa).

Positions 1 to 33 (MSDHGRMHSTGSEVAAPVAPDPDTEGVHPHFNR) are disordered. S-adenosyl-L-methionine is bound by residues glutamate 89, glutamate 114, aspartate 146, and aspartate 169. Residue aspartate 169 is part of the active site. Substrate contacts are provided by residues lysine 173, aspartate 205, and 242-245 (TKYE).

It belongs to the class I-like SAM-binding methyltransferase superfamily. TrmB family.

The catalysed reaction is guanosine(46) in tRNA + S-adenosyl-L-methionine = N(7)-methylguanosine(46) in tRNA + S-adenosyl-L-homocysteine. It participates in tRNA modification; N(7)-methylguanine-tRNA biosynthesis. Functionally, catalyzes the formation of N(7)-methylguanine at position 46 (m7G46) in tRNA. The protein is tRNA (guanine-N(7)-)-methyltransferase of Mycolicibacterium gilvum (strain PYR-GCK) (Mycobacterium gilvum (strain PYR-GCK)).